Reading from the N-terminus, the 564-residue chain is Dihydroxy-acid dehydratase (564 aa).

D80 lines the Mg(2+) pocket. C121 lines the [2Fe-2S] cluster pocket. Residues D122 and K123 each coordinate Mg(2+). K123 carries the N6-carboxylysine modification. Residue C194 coordinates [2Fe-2S] cluster. A Mg(2+)-binding site is contributed by E447. S473 functions as the Proton acceptor in the catalytic mechanism.

It belongs to the IlvD/Edd family. In terms of assembly, homodimer. [2Fe-2S] cluster is required as a cofactor. The cofactor is Mg(2+).

The enzyme catalyses (2R)-2,3-dihydroxy-3-methylbutanoate = 3-methyl-2-oxobutanoate + H2O. The catalysed reaction is (2R,3R)-2,3-dihydroxy-3-methylpentanoate = (S)-3-methyl-2-oxopentanoate + H2O. Its pathway is amino-acid biosynthesis; L-isoleucine biosynthesis; L-isoleucine from 2-oxobutanoate: step 3/4. It functions in the pathway amino-acid biosynthesis; L-valine biosynthesis; L-valine from pyruvate: step 3/4. In terms of biological role, functions in the biosynthesis of branched-chain amino acids. Catalyzes the dehydration of (2R,3R)-2,3-dihydroxy-3-methylpentanoate (2,3-dihydroxy-3-methylvalerate) into 2-oxo-3-methylpentanoate (2-oxo-3-methylvalerate) and of (2R)-2,3-dihydroxy-3-methylbutanoate (2,3-dihydroxyisovalerate) into 2-oxo-3-methylbutanoate (2-oxoisovalerate), the penultimate precursor to L-isoleucine and L-valine, respectively. The protein is Dihydroxy-acid dehydratase of Listeria monocytogenes serotype 4a (strain HCC23).